Here is a 428-residue protein sequence, read N- to C-terminus: Enolase (428 aa).

Position 163 (Gln163) interacts with (2R)-2-phosphoglycerate. Residue Glu205 is the Proton donor of the active site. Mg(2+)-binding residues include Asp242, Glu285, and Asp312. The (2R)-2-phosphoglycerate site is built by Lys337, Arg366, Ser367, and Lys388. Lys337 serves as the catalytic Proton acceptor.

Belongs to the enolase family. The cofactor is Mg(2+).

The protein localises to the cytoplasm. The protein resides in the secreted. It localises to the cell surface. It catalyses the reaction (2R)-2-phosphoglycerate = phosphoenolpyruvate + H2O. The protein operates within carbohydrate degradation; glycolysis; pyruvate from D-glyceraldehyde 3-phosphate: step 4/5. Functionally, catalyzes the reversible conversion of 2-phosphoglycerate (2-PG) into phosphoenolpyruvate (PEP). It is essential for the degradation of carbohydrates via glycolysis. This is Enolase from Novosphingobium aromaticivorans (strain ATCC 700278 / DSM 12444 / CCUG 56034 / CIP 105152 / NBRC 16084 / F199).